Reading from the N-terminus, the 447-residue chain is Glutamate--tRNA ligase 1 (447 aa).

The short motif at P10–N20 is the 'HIGH' region element. Residues K240–R244 carry the 'KMSKS' region motif. ATP is bound at residue K243.

Belongs to the class-I aminoacyl-tRNA synthetase family. Glutamate--tRNA ligase type 1 subfamily. As to quaternary structure, monomer.

The protein localises to the cytoplasm. The catalysed reaction is tRNA(Glu) + L-glutamate + ATP = L-glutamyl-tRNA(Glu) + AMP + diphosphate. Its function is as follows. Catalyzes the attachment of glutamate to tRNA(Glu) in a two-step reaction: glutamate is first activated by ATP to form Glu-AMP and then transferred to the acceptor end of tRNA(Glu). The protein is Glutamate--tRNA ligase 1 of Rickettsia rickettsii (strain Sheila Smith).